A 266-amino-acid polypeptide reads, in one-letter code: MSLLFDPGFVILREDQSVKLFNIILVMSQVFGGLAVLLVTIWMSKFESGFAWNEDPDKEFNYHPTFMIMGMVFLFGEALLVYRVFRNERKKFSKTLHVILHSCVLVFMLMALKAVFDYHNLHKDPSGNPAPIVNLVSLHSWIGLSVVILYFAQYIVGFITYFFPGMPIPIRQLVMPFHQMFGVLIFIFVSITVAMGISERAAWKHTCWTKEGQMCAQQATSSFVGVFTFLYTVCVLLLVLNPRWKRQSLPEEEGLHHLTSSHSMSD.

Residues 1–22 (MSLLFDPGFVILREDQSVKLFN) are Cytoplasmic-facing. A helical transmembrane segment spans residues 23–43 (IILVMSQVFGGLAVLLVTIWM). Residues 27–240 (MSQVFGGLAV…YTVCVLLLVL (214 aa)) enclose the Cytochrome b561 domain. The Vesicular portion of the chain corresponds to 44-61 (SKFESGFAWNEDPDKEFN). Residues 62–82 (YHPTFMIMGMVFLFGEALLVY) traverse the membrane as a helical segment. The heme b site is built by His63, Arg83, and Lys90. The Cytoplasmic portion of the chain corresponds to 83-95 (RVFRNERKKFSKT). Residues Lys90 and Lys94 each coordinate L-ascorbate. The chain crosses the membrane as a helical span at residues 96 to 116 (LHVILHSCVLVFMLMALKAVF). Residues His97, 134-137 (NLVS), and His139 contribute to the heme b site. At 117–141 (DYHNLHKDPSGNPAPIVNLVSLHSW) the chain is on the vesicular side. Residues 142–162 (IGLSVVILYFAQYIVGFITYF) traverse the membrane as a helical segment. The Cytoplasmic portion of the chain corresponds to 163–176 (FPGMPIPIRQLVMP). Arg171 contributes to the L-ascorbate binding site. Residues 177-197 (FHQMFGVLIFIFVSITVAMGI) traverse the membrane as a helical segment. His178 and Glu199 together coordinate heme b. Residues 198–219 (SERAAWKHTCWTKEGQMCAQQA) lie on the Vesicular side of the membrane. A helical transmembrane segment spans residues 220–240 (TSSFVGVFTFLYTVCVLLLVL). Residues 241–266 (NPRWKRQSLPEEEGLHHLTSSHSMSD) lie on the Cytoplasmic side of the membrane. Residue Lys245 coordinates heme b.

Heme b is required as a cofactor.

The protein resides in the membrane. It catalyses the reaction monodehydro-L-ascorbate radical(out) + L-ascorbate(in) = monodehydro-L-ascorbate radical(in) + L-ascorbate(out). Functionally, putative transmembrane reductase that uses ascorbate as an electron donor in the cytoplasm and transfers electrons across membranes to reduce monodehydro-L-ascorbate radical in the lumen of secretory vesicles. In Caenorhabditis elegans, this protein is Putative transmembrane ascorbate-dependent reductase CYB561 homolog.